The sequence spans 265 residues: Glutamate racemase (265 aa).

Residues 7–8 and 39–40 each bind substrate; these read DS and YG. The Proton donor/acceptor role is filled by Cys-70. Substrate is bound at residue 71–72; sequence NT. Cys-177 serves as the catalytic Proton donor/acceptor.

The protein belongs to the aspartate/glutamate racemases family.

The catalysed reaction is L-glutamate = D-glutamate. Its pathway is cell wall biogenesis; peptidoglycan biosynthesis. In terms of biological role, provides the (R)-glutamate required for cell wall biosynthesis. This is Glutamate racemase from Prochlorococcus marinus (strain NATL1A).